Here is a 320-residue protein sequence, read N- to C-terminus: MRYRFGYVSNAVTLWEASPAKSLTFARYSKLSKEEGKEALLRTTKANLVNTLRTLYFAISHDIPLYRFSSSIVPLATHPEVRWDFVTPFQKEFLEIGDLVKRHGLRVSFHPNQFTLFTSPKPSITENAVIDMTYHYQMLEAMKLEKEGYMNIHVGGAYGDKDSALQRFDENIKQLPAHIKARMTLENDDKTYTSLETLGVCEKHGIPFVFDYHHHVANKDDNAALEDILPRMFDTWTSTGIPPKIHLSSPKSEKAIRSHADGVDMSFVLPLFHALKPCGRDVDFMIEAKLKDQALLRLVEELSAIRGNKRVGGGTIEWKP.

The protein belongs to the uve1/UvsE family.

Component in a DNA repair pathway. Removal of UV LIGHT damaged nucleotides. Recognizes pyrimidine dimers and cleave a phosphodiester bond immediately 5' to the lesion. This is UV DNA damage endonuclease from Bacillus pumilus (strain SAFR-032).